A 706-amino-acid chain; its full sequence is G2/M phase-specific E3 ubiquitin-protein ligase (706 aa).

Residues 11-51 (NLACVFCRKHDDCPNKYGEKKTKEKWNLTVHYYCLLMSSGI) form a C2HC pre-PHD-type zinc finger. The segment at 79 to 128 (LKCCVCKKNGASIGCVAPRCKRSYHFPCGLQRECIFQFTGNFASFCWDHR) adopts a PHD-type 1 zinc-finger fold. A PHD-type 2; degenerate zinc finger spans residues 143-193 (PCTICLEFIEPIPSYNILRSPCCKNAWFHRDCLQVQAINAGVFFFRCTICN). The PHD-type 3 zinc finger occupies 237 to 286 (RCRCKEGRDYNAPDSKWEIKRCQCCGSSGTHLACSSLRSWEQNWECLECR). An HECT domain is found at 371–698 (IWNSALDAFR…IRNTLRLEKE (328 aa)).

As to expression, predominantly expressed in brain, liver, kidney, testes and ovary.

Its subcellular location is the nucleus. The protein resides in the nucleolus. It is found in the cytoplasm. It catalyses the reaction S-ubiquitinyl-[E2 ubiquitin-conjugating enzyme]-L-cysteine + [acceptor protein]-L-lysine = [E2 ubiquitin-conjugating enzyme]-L-cysteine + N(6)-ubiquitinyl-[acceptor protein]-L-lysine.. Its pathway is protein modification; protein ubiquitination. Its function is as follows. E3 ubiquitin-protein ligase which accepts ubiquitin from an E2 ubiquitin-conjugating enzyme in the form of a thioester and then directly transfers the ubiquitin to targeted substrates. Essential in early embryonic development to prevent apoptotic death. This is G2/M phase-specific E3 ubiquitin-protein ligase (G2E3) from Homo sapiens (Human).